The chain runs to 132 residues: Large-conductance mechanosensitive channel (132 aa).

3 helical membrane-spanning segments follow: residues 14 to 34 (VVDL…VSSL), 38 to 58 (IITP…LHFG), and 67 to 87 (GNFI…FMFV).

Belongs to the MscL family. Homopentamer.

It is found in the cell membrane. Functionally, channel that opens in response to stretch forces in the membrane lipid bilayer. May participate in the regulation of osmotic pressure changes within the cell. In Bacillus cereus (strain ATCC 10987 / NRS 248), this protein is Large-conductance mechanosensitive channel.